Consider the following 286-residue polypeptide: Serine carboxypeptidase-like (286 aa).

The active site involves Ser-4. Disulfide bonds link Cys-83/Cys-98 and Cys-121/Cys-126. Residue Asp-193 is part of the active site. Cys-196 provides a ligand contact to substrate. Residue Asn-227 is glycosylated (N-linked (GlcNAc...) asparagine). His-250 is a catalytic residue.

It belongs to the peptidase S10 family.

Involved in degradation of small peptides. The protein is Serine carboxypeptidase-like of Pisum sativum (Garden pea).